A 292-amino-acid polypeptide reads, in one-letter code: Protease HtpX homolog (292 aa).

The next 2 helical transmembrane spans lie at 9-29 and 31-51; these read TGVL…VLGN and TGMM…YWYS. His133 provides a ligand contact to Zn(2+). Glu134 is an active-site residue. Position 137 (His137) interacts with Zn(2+). 2 consecutive transmembrane segments (helical) span residues 148–168 and 185–205; these read LAAV…WMLW and LGAI…QMAI. Glu210 contributes to the Zn(2+) binding site.

The protein belongs to the peptidase M48B family. It depends on Zn(2+) as a cofactor.

It is found in the cell membrane. The sequence is that of Protease HtpX homolog from Thermococcus sibiricus (strain DSM 12597 / MM 739).